The primary structure comprises 366 residues: Peptide chain release factor 2 (366 aa).

The residue at position 251 (Gln-251) is an N5-methylglutamine.

Belongs to the prokaryotic/mitochondrial release factor family. Post-translationally, methylated by PrmC. Methylation increases the termination efficiency of RF2.

The protein resides in the cytoplasm. Peptide chain release factor 2 directs the termination of translation in response to the peptide chain termination codons UGA and UAA. This is Peptide chain release factor 2 from Exiguobacterium sp. (strain ATCC BAA-1283 / AT1b).